Consider the following 814-residue polypeptide: MAPPKDPPVLRNLQATADLLDALQNDPSLLNDEEFIKRLSILRQKHEETTNFLAKKLGAPPLPTMMTSSEITQHRSSYKVTKSSSCHFQDEASPSDYQMPRHLDLKPRSSEVRVPVRAAPEPPREQSWSQTEYATLAHNQSHEALYEDPRHQVHATSSHQNPRHQSSRHHNIESTAPSQVSVTSSVQSVAALSGQNPRQQVHATPSHQIPRHQSSRTHQNSRQQVPSATSSTLQNPRHRTSSASRHHSTRNATSATVRQILANASTRHLSSAPHIATSVAMPSGLLLSSSNTKHVASSKSENPQFATSSHVVEESFLEDGMSTTREVPTIRDEVVAGDLKLSKNRSKSMHQLSKYTPQVTVPKPFQLSLRKSTGNTYAKKFMSGLITEKQKLEEDAKKALENTKFRAKPVPKSTYQPTNTFATEQKYVEAMRKKVAAKARRKFEVQNEMVRSKSEGNLASIKPLGYVPPSTYISPIPVKPNARSRSATMRATILIQEATTPKGIKSHRAQSNLTHHLRHGRCTMDASAVSLHRRTSPPDFEKIHAKITDNFRNTNSKPSTVPIPFKFASRSKSATSRHGNCQEQAPKPFKKSTENLPKTSKNRVPSTHATQLREELNRAKIELKKSEKSGKNGNFWAEDNKQRISSFLGARSKTEEDIAMRTKQKLQQQQETTQEYMRQLAEMKQRVLNGPLIMEKQTALAQEHRLKRKFEERMKSAKGRGIERVQSQEKQQSIGRRSSEVSGSGTFVVDKGYEESFESEDKSEKSGSSTPSESGSGSESENESRSSRSSKPKSSKSTSSKSSSSRSTSSSSEA.

The span at 71–87 shows a compositional bias: polar residues; the sequence is ITQHRSSYKVTKSSSCH. Disordered stretches follow at residues 71–130, 150–255, 569–610, and 714–814; these read ITQH…SWSQ, RHQV…ATSA, SRSK…THAT, and MKSA…SSEA. A compositionally biased stretch (basic and acidic residues) spans 99-111; that stretch reads MPRHLDLKPRSSE. A compositionally biased stretch (low complexity) spans 174–193; the sequence is STAPSQVSVTSSVQSVAALS. Composition is skewed to polar residues over residues 194 to 207 and 216 to 235; these read GQNP…TPSH and RTHQ…TLQN. The segment covering 236–249 has biased composition (basic residues); it reads PRHRTSSASRHHST. Polar residues-rich tracts occupy residues 570–583 and 594–610; these read RSKS…NCQE and ENLP…THAT. Residues 606 to 689 are a coiled coil; sequence STHATQLREE…LAEMKQRVLN (84 aa). A compositionally biased stretch (basic and acidic residues) spans 714-727; sequence MKSAKGRGIERVQS. Positions 728 to 745 are enriched in polar residues; that stretch reads QEKQQSIGRRSSEVSGSG. Residues 751-765 show a composition bias toward basic and acidic residues; it reads KGYEESFESEDKSEK. Low complexity-rich tracts occupy residues 766–779 and 795–814; these read SGSS…SGSE and SKST…SSEA.

It belongs to the FAM161 family. Expressed in amphid and phasmid ciliated neurons.

Its subcellular location is the cell projection. The protein resides in the cilium. The protein localises to the cytoplasm. It localises to the cytoskeleton. It is found in the cilium axoneme. The polypeptide is Protein fam-161 (Caenorhabditis elegans).